The following is a 192-amino-acid chain: ATP synthase protein MI25 (192 aa).

Residues 29 to 49 form a helical membrane-spanning segment; the sequence is ISIYNEEMIVARCFIGFLIFS.

Belongs to the ATPase protein MI25 family. F-type ATPases have 2 components, CF(1) - the catalytic core - and CF(0) - the membrane proton channel. CF(1) has five subunits: alpha(3), beta(3), gamma(1), delta(1), epsilon(1). CF(0) has three main subunits: a, b and c.

The protein localises to the mitochondrion membrane. This is one of the chains of the nonenzymatic component (CF(0) subunit) of the mitochondrial ATPase complex. This chain is ATP synthase protein MI25, found in Triticum timopheevii (Timopheev's wheat).